A 153-amino-acid chain; its full sequence is MFKPHVTVACVVHAEGKFLVVEETINGKALWNQPAGHLEADETLVEAAARELWEETGISAQPQHFIRMHQWIAPDKTPFLRFLFAIELEQICPTQPHDSDIDCCRWVSAEEILQASNLRSPLVAESIRCYQSGQRYPLEMIGDFNWPFTKGVI.

The 129-residue stretch at 3 to 131 (KPHVTVACVV…LVAESIRCYQ (129 aa)) folds into the Nudix hydrolase domain. The Nudix box signature appears at 36–57 (GHLEADETLVEAAARELWEETG).

The protein belongs to the Nudix hydrolase family. NudJ subfamily. As to quaternary structure, monomer. Mg(2+) serves as cofactor.

This Escherichia coli O139:H28 (strain E24377A / ETEC) protein is Phosphatase NudJ (nudJ).